A 330-amino-acid chain; its full sequence is Phosphate acyltransferase (330 aa).

It belongs to the PlsX family. As to quaternary structure, homodimer. Probably interacts with PlsY.

The protein resides in the cytoplasm. It carries out the reaction a fatty acyl-[ACP] + phosphate = an acyl phosphate + holo-[ACP]. The protein operates within lipid metabolism; phospholipid metabolism. Catalyzes the reversible formation of acyl-phosphate (acyl-PO(4)) from acyl-[acyl-carrier-protein] (acyl-ACP). This enzyme utilizes acyl-ACP as fatty acyl donor, but not acyl-CoA. This chain is Phosphate acyltransferase, found in Bacillus mycoides (strain KBAB4) (Bacillus weihenstephanensis).